Consider the following 183-residue polypeptide: Capsid protein (183 aa).

The disordered stretch occupies residues 136 to 183; that stretch reads NAPILSTLPETTVVRRRGRSPRRRTPSPRRRRSQSPRRRRSQSRESQC. The segment covering 149 to 176 has biased composition (basic residues); it reads VRRRGRSPRRRTPSPRRRRSQSPRRRRS. Phosphoserine; by host is present on residues Ser155, Ser162, and Ser170. A 1; half-length repeat occupies 155–161; that stretch reads SPRRRTP. Residues 155–177 are 3 X 8 AA repeats of S-P-R-R-R-[PR]-S-Q; the sequence is SPRRRTPSPRRRRSQSPRRRRSQ. A Bipartite nuclear localization signal motif is present at residues 158–175; sequence RRTPSPRRRRSQSPRRRR. 2 consecutive repeat copies span residues 162–169 and 170–177. Residues 177 to 183 form an RNA binding region; it reads QSRESQC.

The protein belongs to the orthohepadnavirus core antigen family. Homodimerizes, then multimerizes. Interacts with cytosol exposed regions of viral L glycoprotein present in the reticulum-to-Golgi compartment. Interacts with human FLNB. Phosphorylated form interacts with host importin alpha; this interaction depends on the exposure of the NLS, which itself depends upon genome maturation and/or phosphorylation of the capsid protein. Interacts with host NUP153. Phosphorylated by host SRPK1, SRPK2, and maybe protein kinase C or GAPDH. Phosphorylation is critical for pregenomic RNA packaging. Protein kinase C phosphorylation is stimulated by HBx protein and may play a role in transport of the viral genome to the nucleus at the late step during the viral replication cycle.

It is found in the virion. Its subcellular location is the host cytoplasm. Self assembles to form an icosahedral capsid. Most capsids appear to be large particles with an icosahedral symmetry of T=4 and consist of 240 copies of capsid protein, though a fraction forms smaller T=3 particles consisting of 180 capsid proteins. Entering capsids are transported along microtubules to the nucleus. Phosphorylation of the capsid is thought to induce exposure of nuclear localization signal in the C-terminal portion of the capsid protein that allows binding to the nuclear pore complex via the importin (karyopherin-) alpha and beta. Capsids are imported in intact form through the nuclear pore into the nuclear basket, where it probably binds NUP153. Only capsids that contain the mature viral genome can release the viral DNA and capsid protein into the nucleoplasm. Immature capsids get stuck in the basket. Capsids encapsulate the pre-genomic RNA and the P protein. Pre-genomic RNA is reverse-transcribed into DNA while the capsid is still in the cytoplasm. The capsid can then either be directed to the nucleus, providing more genomes for transcription, or bud through the endoplasmic reticulum to provide new virions. This is Capsid protein from Hepatitis B virus genotype B/C subtype adw (isolate Okinawa/pODW282/1998) (HBV-B).